The following is a 601-amino-acid chain: Dual specificity tyrosine-phosphorylation-regulated kinase 2 (601 aa).

The tract at residues 1–24 (MLTRKPSAAAPAAYPTGRGGDSAV) is disordered. S30 is subject to Phosphoserine. T106 is modified (phosphothreonine; by ATM). A Nuclear localization signal motif is present at residues 189 to 191 (KKR). A Protein kinase domain is found at 222–535 (YEVLKVIGKG…PGQALRHPWL (314 aa)). ATP is bound by residues 228 to 236 (IGKGSFGQV), K251, and 301 to 304 (FELL). D348 serves as the catalytic Proton acceptor. Residue T381 is modified to Phosphothreonine; by MAP3K10. Residue Y382 is modified to Phosphotyrosine; by autocatalysis. Phosphoserine; by ATM is present on S442. S449 is modified (phosphoserine; by MAP3K10).

The protein belongs to the protein kinase superfamily. CMGC Ser/Thr protein kinase family. MNB/DYRK subfamily. As to quaternary structure, component of an E3 ligase complex containing DYRK2, EDD/UBR5, DDB1 and DCAF1 (EDVP complex). Interacts directly with EDD/UBR5, DDB1 and DCAF1. Interacts with SIAH2 and MDM2. Interacts with MAP3K10 and NFATC1. May also interact with CCNL2. Requires Mg(2+) as cofactor. It depends on Mn(2+) as a cofactor. Post-translationally, autophosphorylates cotranslationally on the second tyrosine residue in the Tyr-X-Tyr motif in the activation loop, but once mature, does not have any protein tyrosine kinase activity. Phosphorylated at Thr-106 and Ser-442 by ATM in response to genotoxic stress. In terms of processing, under normal conditions, polyubiquitinated in the nucleus by MDM2, leading to its proteasomal degradation. Phosphorylation on Thr-106 and Ser-442 by ATM in response to genotoxic stress disrupts MDM2 binding and prevents MDM2-mediated ubiquitination and subsequent proteasomal degradation. Polyubiquitinated by SIAH2, leading to its proteasomal degradation. Polyubiquitinated by SIAH2 occurs under normal conditions, and is enhanced in response to hypoxia. As to expression, testis, after the onset of spermatogenesis.

The protein localises to the cytoplasm. Its subcellular location is the nucleus. It catalyses the reaction L-seryl-[protein] + ATP = O-phospho-L-seryl-[protein] + ADP + H(+). The enzyme catalyses L-threonyl-[protein] + ATP = O-phospho-L-threonyl-[protein] + ADP + H(+). The catalysed reaction is L-tyrosyl-[protein] + ATP = O-phospho-L-tyrosyl-[protein] + ADP + H(+). With respect to regulation, activated by autophosphorylation on the second tyrosine residue in the Tyr-X-Tyr motif in the activation loop. Inhibited by acridine analogs, purvalanol, and barely by harmine. Inhibited by leucettine and leucettine derivatives. Its function is as follows. Serine/threonine-protein kinase involved in the regulation of the mitotic cell cycle, cell proliferation, apoptosis, organization of the cytoskeleton and neurite outgrowth. Functions in part via its role in ubiquitin-dependent proteasomal protein degradation. Functions downstream of ATM and phosphorylates p53/TP53 at 'Ser-46', and thereby contributes to the induction of apoptosis in response to DNA damage. Phosphorylates NFATC1, and thereby inhibits its accumulation in the nucleus and its transcription factor activity. Phosphorylates EIF2B5 at 'Ser-544', enabling its subsequent phosphorylation and inhibition by GSK3B. Likewise, phosphorylation of NFATC1, CRMP2/DPYSL2 and CRMP4/DPYSL3 promotes their subsequent phosphorylation by GSK3B. May play a general role in the priming of GSK3 substrates. Inactivates GYS1 by phosphorylation at 'Ser-641', and potentially also a second phosphorylation site, thus regulating glycogen synthesis. Mediates EDVP E3 ligase complex formation and is required for the phosphorylation and subsequent degradation of KATNA1. Phosphorylates TERT at 'Ser-457', promoting TERT ubiquitination by the EDVP complex. Phosphorylates SIAH2, and thereby increases its ubiquitin ligase activity. Promotes the proteasomal degradation of MYC and JUN, and thereby regulates progress through the mitotic cell cycle and cell proliferation. Promotes proteasomal degradation of GLI2 and GLI3, and thereby plays a role in smoothened and sonic hedgehog signaling. Plays a role in cytoskeleton organization and neurite outgrowth via its phosphorylation of DCX and DPYSL2. Phosphorylates CRMP2/DPYSL2, CRMP4/DPYSL3, DCX, EIF2B5, EIF4EBP1, GLI2, GLI3, GYS1, JUN, MDM2, MYC, NFATC1, p53/TP53, TAU/MAPT and KATNA1. Can phosphorylate histone H1, histone H3 and histone H2B (in vitro). Can phosphorylate CARHSP1 (in vitro). This Homo sapiens (Human) protein is Dual specificity tyrosine-phosphorylation-regulated kinase 2 (DYRK2).